The chain runs to 219 residues: Ribose-5-phosphate isomerase A (219 aa).

Substrate contacts are provided by residues 28-31 (SGST), 81-84 (DGAD), and 94-97 (KGGG). Glutamate 103 serves as the catalytic Proton acceptor. Residue lysine 121 participates in substrate binding.

It belongs to the ribose 5-phosphate isomerase family. As to quaternary structure, homodimer.

It catalyses the reaction aldehydo-D-ribose 5-phosphate = D-ribulose 5-phosphate. It functions in the pathway carbohydrate degradation; pentose phosphate pathway; D-ribose 5-phosphate from D-ribulose 5-phosphate (non-oxidative stage): step 1/1. Functionally, catalyzes the reversible conversion of ribose-5-phosphate to ribulose 5-phosphate. The sequence is that of Ribose-5-phosphate isomerase A from Actinobacillus pleuropneumoniae serotype 5b (strain L20).